We begin with the raw amino-acid sequence, 631 residues long: Fatty acid ABC transporter ATP-binding/permease protein (631 aa).

Over residues 1–11 (MTAPPGARPRA) the composition is skewed to low complexity. The tract at residues 1-20 (MTAPPGARPRAASPPPNMRS) is disordered. Helical transmembrane passes span 42-62 (IAVI…PRIL), 123-143 (LALA…QARL), and 205-225 (ILTM…LALI). In terms of domain architecture, ABC transmembrane type-1 spans 42 to 365 (IAVITLGIAG…LAGMYNALQS (324 aa)). Positions 397-631 (VEFEHVNFAY…RGVYYQMTRA (235 aa)) constitute an ABC transporter domain. Residue 430–437 (GPTGAGKT) coordinates ATP.

It belongs to the ABC transporter superfamily. Lipid exporter (TC 3.A.1.106) family.

It localises to the cell inner membrane. Its function is as follows. ABC transporter involved in fatty acid import. Transmembrane domains (TMD) form a pore in the membrane and the ATP-binding domain (NBD) is responsible for energy generation. This Mycobacterium bovis (strain ATCC BAA-935 / AF2122/97) protein is Fatty acid ABC transporter ATP-binding/permease protein.